The following is a 79-amino-acid chain: Putative defensin-like protein 203 (79 aa).

A signal peptide spans methionine 1 to alanine 27. Intrachain disulfides connect cysteine 30–cysteine 79, cysteine 40–cysteine 64, cysteine 49–cysteine 73, and cysteine 53–cysteine 75.

This sequence belongs to the DEFL family.

The protein resides in the secreted. This Arabidopsis thaliana (Mouse-ear cress) protein is Putative defensin-like protein 203.